Reading from the N-terminus, the 142-residue chain is Protein SprT-like (142 aa).

The SprT-like domain maps to 4 to 138 (YVKKVSIEDF…FACGYCHGRL (135 aa)). Zn(2+) is bound at residue histidine 62. The active site involves glutamate 63. Histidine 66 serves as a coordination point for Zn(2+).

The protein belongs to the SprT family. Zn(2+) is required as a cofactor.

Its subcellular location is the cytoplasm. This Streptococcus agalactiae serotype Ia (strain ATCC 27591 / A909 / CDC SS700) protein is Protein SprT-like.